An 815-amino-acid polypeptide reads, in one-letter code: Phenylalanine--tRNA ligase beta subunit (815 aa).

The 116-residue stretch at 40-155 folds into the tRNA-binding domain; sequence APPFDKIVVA…EDAPVGQNIR (116 aa). In terms of domain architecture, B5 spans 406 to 485; sequence PQRRPVSLRL…RIYGFERIAA (80 aa). Residues Asp-463, Asp-469, Glu-472, and Glu-473 each coordinate Mg(2+). Positions 712 to 814 constitute an FDX-ACB domain; it reads SKFPAAVRDL…LGEAFQARLR (103 aa).

Belongs to the phenylalanyl-tRNA synthetase beta subunit family. Type 1 subfamily. In terms of assembly, tetramer of two alpha and two beta subunits. Requires Mg(2+) as cofactor.

The protein localises to the cytoplasm. The enzyme catalyses tRNA(Phe) + L-phenylalanine + ATP = L-phenylalanyl-tRNA(Phe) + AMP + diphosphate + H(+). This chain is Phenylalanine--tRNA ligase beta subunit, found in Cupriavidus pinatubonensis (strain JMP 134 / LMG 1197) (Cupriavidus necator (strain JMP 134)).